We begin with the raw amino-acid sequence, 259 residues long: Global transcriptional regulator CodY (259 aa).

The tract at residues 1–155 (MNLLEKTRKI…GATVVGMEIL (155 aa)) is GAF domain. A DNA-binding region (H-T-H motif) is located at residues 203–222 (ASKIADRVGITRSVIVNALR). Residue Ser-215 is modified to Phosphoserine.

Belongs to the CodY family.

It is found in the cytoplasm. In terms of biological role, DNA-binding global transcriptional regulator which is involved in the adaptive response to starvation and acts by directly or indirectly controlling the expression of numerous genes in response to nutrient availability. During rapid exponential growth, CodY is highly active and represses genes whose products allow adaptation to nutrient depletion. In Geobacillus kaustophilus (strain HTA426), this protein is Global transcriptional regulator CodY.